The sequence spans 686 residues: Envelope glycoprotein H (686 aa).

Residues 1-24 (MPASSVRLPLRLLTLAGLLALAGA) form the signal peptide. At 25-646 (AALARGAPQG…TSTRLAPVSP (622 aa)) the chain is on the virion surface side. N-linked (GlcNAc...) asparagine; by host glycosylation is found at asparagine 77, asparagine 162, asparagine 542, asparagine 604, and asparagine 627. Residues 157 to 217 (PAAVFNVTLG…PPAGRFHVYT (61 aa)) form an interaction with gL region. The chain crosses the membrane as a helical span at residues 647–667 (AYVVASVVGAAITVGILYALF). Topologically, residues 668-686 (KMLCSFSSEGYSRLINARS) are intravirion.

The protein belongs to the herpesviridae glycoprotein H family. In terms of assembly, interacts with glycoprotein L (gL); this interaction is necessary for the correct processing and cell surface expression of gH. The heterodimer gH/gL seems to interact with gB trimers during fusion. In terms of processing, N-glycosylated, O-glycosylated, and sialylated.

It localises to the virion membrane. The protein resides in the host cell membrane. The protein localises to the host endosome membrane. Its function is as follows. The heterodimer glycoprotein H-glycoprotein L is required for the fusion of viral and plasma membranes leading to virus entry into the host cell. Following initial binding to host receptor, membrane fusion is mediated by the fusion machinery composed of gB and the heterodimer gH/gL. May also be involved in the fusion between the virion envelope and the outer nuclear membrane during virion morphogenesis. The chain is Envelope glycoprotein H from Sus scrofa (Pig).